A 566-amino-acid polypeptide reads, in one-letter code: Arginine--tRNA ligase (566 aa).

Residues 121-131 carry the 'HIGH' region motif; the sequence is ANPNGPFHIGH.

Belongs to the class-I aminoacyl-tRNA synthetase family.

Its subcellular location is the cytoplasm. The catalysed reaction is tRNA(Arg) + L-arginine + ATP = L-arginyl-tRNA(Arg) + AMP + diphosphate. This is Arginine--tRNA ligase from Methanococcus maripaludis (strain C6 / ATCC BAA-1332).